We begin with the raw amino-acid sequence, 37 residues long: Cytochrome bd-I ubiquinol oxidase subunit X (37 aa).

A helical membrane pass occupies residues 4 to 24 (FAWILGTLLACSFGVITALAL).

It belongs to the cytochrome ubiquinol oxidase subunit X family. May be a subunit of cytochrome bd-I ubiquinol oxidase. Probably interacts with CydA and CydB.

The protein resides in the cell inner membrane. It carries out the reaction 2 a ubiquinol + O2(in) + 4 H(+)(in) = 2 a ubiquinone + 2 H2O(in) + 4 H(+)(out). It functions in the pathway energy metabolism; oxidative phosphorylation. Functionally, required for correct functioning of cytochrome bd-I oxidase. This protein and AppX may have some functional overlap. The sequence is that of Cytochrome bd-I ubiquinol oxidase subunit X (cydX) from Escherichia coli (strain K12).